The sequence spans 77 residues: Sec-independent protein translocase protein TatA (77 aa).

Residues 1–21 (MGGISIWQLLIIALIVVLLFG) form a helical membrane-spanning segment. Composition is skewed to basic and acidic residues over residues 47-56 (EKKALEDKEA) and 65-77 (TEKK…KEQA). The tract at residues 47–77 (EKKALEDKEAAAQTTQQATEKKPEADKKEQA) is disordered.

The protein belongs to the TatA/E family. In terms of assembly, the Tat system comprises two distinct complexes: a TatABC complex, containing multiple copies of TatA, TatB and TatC subunits, and a separate TatA complex, containing only TatA subunits. Substrates initially bind to the TatABC complex, which probably triggers association of the separate TatA complex to form the active translocon.

It localises to the cell inner membrane. Part of the twin-arginine translocation (Tat) system that transports large folded proteins containing a characteristic twin-arginine motif in their signal peptide across membranes. TatA could form the protein-conducting channel of the Tat system. In Shewanella amazonensis (strain ATCC BAA-1098 / SB2B), this protein is Sec-independent protein translocase protein TatA.